We begin with the raw amino-acid sequence, 304 residues long: 6-dehydroglucose reductase (304 aa).

NADP(+) is bound by residues W28, R29, and D56. The Proton donor role is filled by Y61. Residues Y61, H133, and R134 each coordinate D-glucose. S163, N164, Q185, S215, L217, G219, G268, S269, Q270, and R274 together coordinate NADP(+).

Belongs to the aldo/keto reductase family.

It carries out the reaction D-glucose + NADP(+) = 6-dehydro-D-glucose + NADPH + H(+). Functionally, part of the alkanesulfonate monooxygenase (sulfo-ASMO) pathway, a D-sulfoquinovose degradation pathway that enables the complete utilization of all carbons within sulfoquinovose (SQ) with concomitant production of inorganic sulfite. Catalyzes the NADP-dependent reduction of 6-dehydro-D-glucose to D-glucose. Can also catalyze the reversible reaction, the formation of 6-dehydro-D-glucose from D-glucose in the presence of NADP(+). This is 6-dehydroglucose reductase from Novosphingobium aromaticivorans (strain ATCC 700278 / DSM 12444 / CCUG 56034 / CIP 105152 / NBRC 16084 / F199).